The sequence spans 234 residues: Small ribosomal subunit protein uS2 (234 aa).

The protein belongs to the universal ribosomal protein uS2 family.

This chain is Small ribosomal subunit protein uS2, found in Prochlorococcus marinus subsp. pastoris (strain CCMP1986 / NIES-2087 / MED4).